The following is an 885-amino-acid chain: MTGPLTTAEIREKFLSFFESKGHLRLPSHSLIAPDPTTLFTVAGMQPFKPQFMGAPAKFPGYGENRRVTTAQKCIRVGDIENVGRTRRHLSLFEMMGNFSFGDYFKREAILWAWEFLTSPEWLGMDPARMYVTIYEDDNEAFGYWTQDVGLPEDHIHRFGADENFWPADAPAKGPNGPCGPCSEIYYDRGPHYGDDTWADYAQTRESARFLEVWNLVFPQYDRQDGGVLADLPFKNIDTGMGLERVASVVQDVPDFYSNDVFRPLVEKVAELSGKPYEGEVSVSHRVVAEHIRSVAMTIADGVALSNTGRGYVIRKILRRASRHAYLLGLHEPTLYRLVPLVVQAMGGAYPELVTEEARVTAAIRAEEERFLKTLESGMQRLSGLLEGMERGAVLPGEEAFLLYDTYGFPLDLTKEIAEEYGISVNEAEYAESLERAQETARAASKYGKSELFGGSQEALEGLPPTQFVGYDELEAQGEVLALVGAGERLDHLMAGSEATVVLSRTPFYAEGGGEVGDTGVLEWEGGRGLVRDTRKTPAGIWLHDVLVEEGELTPGVTVRGVVSSERQAIQRHHTATHLLHAALRAVLGPGVRQAGSLVAPERLRFDFTHGAALTADELGQVERLVSRWVTANFPVTWREMPLAEAKAAGATALFGEKYGDTVRVVRVEGGIPFGDATVTSMELCGGAHVTRTGDIGAFVIVSDENVAAGVRRIEALAGEAATAWVRAQLNNVHRVSGLLNTSPDTLETRVIGLQSQLRAAQQETAQARRQLAEAQMGGASTQQVRELGGFKVAVLRLSGIEGGELRGAADKLLDQSGADLAVIASDKGLVVKASKTAVARGAHAGQLIGKLAAAGGGKGGGRPDMAQAGIGNPEAALAALDTAF.

Residues His574, His578, Cys685, and His689 each contribute to the Zn(2+) site.

Belongs to the class-II aminoacyl-tRNA synthetase family. The cofactor is Zn(2+).

The protein resides in the cytoplasm. The enzyme catalyses tRNA(Ala) + L-alanine + ATP = L-alanyl-tRNA(Ala) + AMP + diphosphate. In terms of biological role, catalyzes the attachment of alanine to tRNA(Ala) in a two-step reaction: alanine is first activated by ATP to form Ala-AMP and then transferred to the acceptor end of tRNA(Ala). Also edits incorrectly charged Ser-tRNA(Ala) and Gly-tRNA(Ala) via its editing domain. This Deinococcus geothermalis (strain DSM 11300 / CIP 105573 / AG-3a) protein is Alanine--tRNA ligase.